Reading from the N-terminus, the 177-residue chain is Thymidine kinase (177 aa).

An ATP-binding site is contributed by 11-18 (GPMLSGKS). Glu-83 (proton acceptor) is an active-site residue. Residue Phe-113 coordinates substrate. The Zn(2+) site is built by Cys-138 and Cys-141. 157–161 (IEIIG) is a substrate binding site. Cys-170 and Cys-173 together coordinate Zn(2+).

This sequence belongs to the thymidine kinase family. In terms of assembly, homotetramer. Two molecules of substrate bind to each enzyme tetramer.

The enzyme catalyses thymidine + ATP = dTMP + ADP + H(+). In terms of biological role, phosphorylates thymidine and thymidine analogs, such as azidothymidine (AZT). Part of the salvage pathway for pyrimidine deoxyribonucleotide synthesis. This chain is Thymidine kinase (OPG101), found in Monkeypox virus (strain Zaire-96-I-16) (MPX).